We begin with the raw amino-acid sequence, 213 residues long: 5''-phosphoribostamycin phosphatase (213 aa).

The active-site Tele-phosphohistidine intermediate is His-8. The active site involves His-155.

It belongs to the histidine phosphatase superfamily.

It carries out the reaction 5''-phosphoribostamycin + H2O = ribostamycin + phosphate. It participates in antibiotic biosynthesis; butirosin biosynthesis. Its function is as follows. Catalyzes dephosphorylation of 5''-phosphoribostamycin to generate ribostamycinin the biosynthetic pathway of butirosin. The sequence is that of 5''-phosphoribostamycin phosphatase (btrP) from Niallia circulans (Bacillus circulans).